The chain runs to 344 residues: DNA-directed RNA polymerase subunit alpha (344 aa).

The interval 1–232 (MGQYTINLRE…HLFLPPFGLE (232 aa)) is alpha N-terminal domain (alpha-NTD). Residues 270-344 (LIKDQFLEYS…KRFGINLKLK (75 aa)) are alpha C-terminal domain (alpha-CTD).

Belongs to the RNA polymerase alpha chain family. In terms of assembly, in plastids the minimal PEP RNA polymerase catalytic core is composed of four subunits: alpha, beta, beta', and beta''. When a (nuclear-encoded) sigma factor is associated with the core the holoenzyme is formed, which can initiate transcription.

It localises to the plastid. The protein localises to the chloroplast. It carries out the reaction RNA(n) + a ribonucleoside 5'-triphosphate = RNA(n+1) + diphosphate. Functionally, DNA-dependent RNA polymerase catalyzes the transcription of DNA into RNA using the four ribonucleoside triphosphates as substrates. This Spirogyra maxima (Green alga) protein is DNA-directed RNA polymerase subunit alpha.